Here is a 66-residue protein sequence, read N- to C-terminus: DNA-directed RNA polymerase subunit omega (66 aa).

Belongs to the RNA polymerase subunit omega family. In terms of assembly, the RNAP catalytic core consists of 2 alpha, 1 beta, 1 beta' and 1 omega subunit. When a sigma factor is associated with the core the holoenzyme is formed, which can initiate transcription.

The catalysed reaction is RNA(n) + a ribonucleoside 5'-triphosphate = RNA(n+1) + diphosphate. Promotes RNA polymerase assembly. Latches the N- and C-terminal regions of the beta' subunit thereby facilitating its interaction with the beta and alpha subunits. This Clostridium botulinum (strain Alaska E43 / Type E3) protein is DNA-directed RNA polymerase subunit omega.